The sequence spans 386 residues: Bifunctional enzyme IspD/IspF (386 aa).

The segment at 1-229 (MIRGERVIGI…RARALLEAPV (229 aa)) is 2-C-methyl-D-erythritol 4-phosphate cytidylyltransferase. Residues 230–386 (ATGVGYDTHR…AIALLVRAAG (157 aa)) are 2-C-methyl-D-erythritol 2,4-cyclodiphosphate synthase. Residues Asp-236 and His-238 each contribute to the a divalent metal cation site. Residues 236–238 (DTH) and 261–262 (HS) contribute to the 4-CDP-2-C-methyl-D-erythritol 2-phosphate site. His-269 contributes to the a divalent metal cation binding site. Residues 283–285 (DLG), 288–292 (FPDTD), 359–362 (TTGE), Phe-366, and Arg-369 contribute to the 4-CDP-2-C-methyl-D-erythritol 2-phosphate site.

The protein in the N-terminal section; belongs to the IspD/TarI cytidylyltransferase family. IspD subfamily. It in the C-terminal section; belongs to the IspF family. The cofactor is a divalent metal cation.

The enzyme catalyses 2-C-methyl-D-erythritol 4-phosphate + CTP + H(+) = 4-CDP-2-C-methyl-D-erythritol + diphosphate. It carries out the reaction 4-CDP-2-C-methyl-D-erythritol 2-phosphate = 2-C-methyl-D-erythritol 2,4-cyclic diphosphate + CMP. The protein operates within isoprenoid biosynthesis; isopentenyl diphosphate biosynthesis via DXP pathway; isopentenyl diphosphate from 1-deoxy-D-xylulose 5-phosphate: step 2/6. Its pathway is isoprenoid biosynthesis; isopentenyl diphosphate biosynthesis via DXP pathway; isopentenyl diphosphate from 1-deoxy-D-xylulose 5-phosphate: step 4/6. Functionally, bifunctional enzyme that catalyzes the formation of 4-diphosphocytidyl-2-C-methyl-D-erythritol from CTP and 2-C-methyl-D-erythritol 4-phosphate (MEP) (IspD), and catalyzes the conversion of 4-diphosphocytidyl-2-C-methyl-D-erythritol 2-phosphate (CDP-ME2P) to 2-C-methyl-D-erythritol 2,4-cyclodiphosphate (ME-CPP) with a corresponding release of cytidine 5-monophosphate (CMP) (IspF). This chain is Bifunctional enzyme IspD/IspF, found in Anaeromyxobacter dehalogenans (strain 2CP-C).